A 177-amino-acid polypeptide reads, in one-letter code: Adenine phosphoribosyltransferase (177 aa).

It belongs to the purine/pyrimidine phosphoribosyltransferase family. Homodimer.

It localises to the cytoplasm. It catalyses the reaction AMP + diphosphate = 5-phospho-alpha-D-ribose 1-diphosphate + adenine. It participates in purine metabolism; AMP biosynthesis via salvage pathway; AMP from adenine: step 1/1. In terms of biological role, catalyzes a salvage reaction resulting in the formation of AMP, that is energically less costly than de novo synthesis. The chain is Adenine phosphoribosyltransferase from Pelodictyon phaeoclathratiforme (strain DSM 5477 / BU-1).